The primary structure comprises 85 residues: Putative membrane protein insertion efficiency factor (85 aa).

This sequence belongs to the UPF0161 family.

Its subcellular location is the cell inner membrane. Its function is as follows. Could be involved in insertion of integral membrane proteins into the membrane. The chain is Putative membrane protein insertion efficiency factor from Tolumonas auensis (strain DSM 9187 / NBRC 110442 / TA 4).